The primary structure comprises 351 residues: Neutral protease 2 homolog MGG_10927 (351 aa).

Residues 1-16 (MKFSIGVSLLATLAGA) form the signal peptide. Residues 17 to 177 (VNVDMAKRDT…AAFLAKRTIV (161 aa)) constitute a propeptide that is removed on maturation. Cystine bridges form between C181–C253 and C260–C278. H303 is a binding site for Zn(2+). The active site involves E304. H307 is a Zn(2+) binding site.

The protein belongs to the peptidase M35 family. The cofactor is Zn(2+).

Its subcellular location is the secreted. It catalyses the reaction Preferential cleavage of bonds with hydrophobic residues in P1'. Also 3-Asn-|-Gln-4 and 8-Gly-|-Ser-9 bonds in insulin B chain.. Secreted metalloproteinase that allows assimilation of proteinaceous substrates. Shows high activities on basic nuclear substrates such as histone and protamine. The polypeptide is Neutral protease 2 homolog MGG_10927 (Colletotrichum graminicola (strain M1.001 / M2 / FGSC 10212) (Maize anthracnose fungus)).